Consider the following 129-residue polypeptide: Transcription antitermination protein NusB (129 aa).

The protein belongs to the NusB family.

Its function is as follows. Involved in transcription antitermination. Required for transcription of ribosomal RNA (rRNA) genes. Binds specifically to the boxA antiterminator sequence of the ribosomal RNA (rrn) operons. The sequence is that of Transcription antitermination protein NusB from Bacillus licheniformis (strain ATCC 14580 / DSM 13 / JCM 2505 / CCUG 7422 / NBRC 12200 / NCIMB 9375 / NCTC 10341 / NRRL NRS-1264 / Gibson 46).